We begin with the raw amino-acid sequence, 732 residues long: Catalase-peroxidase (732 aa).

Residues 1-10 (MDAKTDDKAG) show a composition bias toward basic and acidic residues. The interval 1-26 (MDAKTDDKAGKCPVAHGPAPRGNRDW) is disordered. The segment at residues 95 to 217 (WHSAGTYRTT…LGAVQMGLIY (123 aa)) is a cross-link (tryptophyl-tyrosyl-methioninium (Trp-Tyr) (with M-243)). Catalysis depends on H96, which acts as the Proton acceptor. A cross-link (tryptophyl-tyrosyl-methioninium (Tyr-Met) (with W-95)) is located at residues 217-243 (YVNPEGPNGNPDPLGSAKDIRETFARM). H258 lines the heme b pocket.

The protein belongs to the peroxidase family. Peroxidase/catalase subfamily. In terms of assembly, homodimer or homotetramer. Requires heme b as cofactor. Formation of the three residue Trp-Tyr-Met cross-link is important for the catalase, but not the peroxidase activity of the enzyme.

The catalysed reaction is H2O2 + AH2 = A + 2 H2O. It catalyses the reaction 2 H2O2 = O2 + 2 H2O. Bifunctional enzyme with both catalase and broad-spectrum peroxidase activity. The sequence is that of Catalase-peroxidase from Rhodopseudomonas palustris (strain BisB18).